Here is a 333-residue protein sequence, read N- to C-terminus: CMP-N-acetylneuraminate-beta-galactosamide-alpha-2,3-sialyltransferase 4 (333 aa).

The Cytoplasmic portion of the chain corresponds to 1–8; that stretch reads MTSKSHWK. A helical; Signal-anchor for type II membrane protein transmembrane segment spans residues 9 to 26; it reads LLALALVLVVVMVWYSIS. Residues 27-333 lie on the Lumenal side of the membrane; the sequence is REDRYIEFFY…MGAVKNLTYF (307 aa). 4 N-linked (GlcNAc...) asparagine glycosylation sites follow: asparagine 61, asparagine 131, asparagine 310, and asparagine 329. Cysteines 120 and 273 form a disulfide.

This sequence belongs to the glycosyltransferase 29 family.

It is found in the golgi apparatus. Its subcellular location is the golgi stack membrane. It carries out the reaction a beta-D-galactosyl-(1-&gt;3)-N-acetyl-beta-D-galactosaminyl derivative + CMP-N-acetyl-beta-neuraminate = an N-acetyl-alpha-neuraminyl-(2-&gt;3)-beta-D-galactosyl-(1-&gt;3)-N-acetyl-beta-D-galactosaminyl derivative + CMP + H(+). The catalysed reaction is a beta-D-galactosyl-(1-&gt;3)-N-acetyl-alpha-D-galactosaminyl derivative + CMP-N-acetyl-beta-neuraminate = an N-acetyl-alpha-neuraminyl-(2-&gt;3)-beta-D-galactosyl-(1-&gt;3)-N-acetyl-alpha-D-galactosaminyl derivative + CMP + H(+). It catalyses the reaction a beta-D-galactosyl-(1-&gt;4)-N-acetyl-beta-D-glucosaminyl derivative + CMP-N-acetyl-beta-neuraminate = an N-acetyl-alpha-neuraminyl-(2-&gt;3)-beta-D-galactosyl-(1-&gt;4)-N-acetyl-beta-D-glucosaminyl derivative + CMP + H(+). The enzyme catalyses a ganglioside GM1 (d18:1(4E)) + CMP-N-acetyl-beta-neuraminate = a ganglioside GD1a (d18:1(4E)) + CMP + H(+). It carries out the reaction a ganglioside GA1 (d18:1(4E)) + CMP-N-acetyl-beta-neuraminate = a ganglioside GM1b (d18:1(4E)) + CMP + H(+). The catalysed reaction is a ganglioside GT1c (d18:1(4E)) + CMP-N-acetyl-beta-neuraminate = a ganglioside GQ1c (d18:1(4E)) + CMP + H(+). It catalyses the reaction a neolactoside nLc4Cer + CMP-N-acetyl-beta-neuraminate = a neolactoside IV(3)-alpha-NeuAc-nLc4Cer + CMP + H(+). The enzyme catalyses a neolactoside nLc4Cer(d18:1(4E)) + CMP-N-acetyl-beta-neuraminate = a neolactoside IV(3)-alpha-NeuAc-nLc4Cer(d18:1(4E)) + CMP + H(+). The protein operates within protein modification; protein glycosylation. It participates in glycolipid biosynthesis. A beta-galactoside alpha2-3 sialyltransferase involved in terminal sialylation of glycoproteins and glycolipids. Catalyzes the transfer of sialic acid (N-acetyl-neuraminic acid; Neu5Ac) from the nucleotide sugar donor CMP-Neu5Ac onto acceptor Galbeta-(1-&gt;3)-GalNAc- and Galbeta-(1-&gt;4)-GlcNAc-terminated glycoconjugates through an alpha2-3 linkage. Plays a major role in hemostasis. Responsible for sialylation of plasma VWF/von Willebrand factor, preventing its recognition by asialoglycoprotein receptors (ASGPR) and subsequent clearance. Regulates ASGPR-mediated clearance of platelets. Participates in the biosynthesis of the sialyl Lewis X epitopes, both on O- and N-glycans, which are recognized by SELE/E-selectin, SELP/P-selectin and SELL/L-selectin. Essential for selectin-mediated rolling and adhesion of leukocytes during extravasation. Contributes to adhesion and transendothelial migration of neutrophils likely through terminal sialylation of CXCR2. In glycosphingolipid biosynthesis, sialylates GM1 and GA1 gangliosides to form GD1a and GM1b, respectively. Metabolizes brain c-series ganglioside GT1c forming GQ1c. Synthesizes ganglioside LM1 (IV3Neu5Ac-nLc4Cer), a major structural component of peripheral nerve myelin. The polypeptide is CMP-N-acetylneuraminate-beta-galactosamide-alpha-2,3-sialyltransferase 4 (St3gal4) (Rattus norvegicus (Rat)).